Here is a 714-residue protein sequence, read N- to C-terminus: Kinesin-like protein KIN-13 (714 aa).

The SAM domain maps to 1 to 63; that stretch reads MSDLVYQWLE…FRLITTLKSR (63 aa). Residues 69-81 show a composition bias toward polar residues; that stretch reads QQPSAPNTGATPQ. Disordered stretches follow at residues 69–109 and 122–161; these read QQPS…NDIQ and GGYEPPYVSAQGSGPANGDDYVIPTIPYHPNAPNPPNPRG. The segment covering 82-92 has biased composition (low complexity); that stretch reads SVPSSHVSPHV. The segment covering 151 to 160 has biased composition (pro residues); it reads PNAPNPPNPR. Residues 183–515 enclose the Kinesin motor domain; that stretch reads RIRVVIRKRP…LRYADRVKEL (333 aa). An ATP-binding site is contributed by 273-280; that stretch reads GQTGSGKS.

It belongs to the TRAFAC class myosin-kinesin ATPase superfamily. Kinesin family. KIN-13 subfamily. In terms of assembly, interacts with PLK. Phosphorylated by PLK.

It localises to the cytoplasm. It is found in the cytoskeleton. The protein resides in the cell projection. Its subcellular location is the cilium. The protein localises to the flagellum. It localises to the flagellum basal body. It is found in the flagellum axoneme. The protein resides in the spindle. Its subcellular location is the chromosome. The protein localises to the centromere. It localises to the kinetochore. Functionally, involved in cell cycle. Involved in formation of flagella, regulation of flagellar length, and formation of median bodies during interphase. Regulates flagellar length in all eight distal flagellar tips by promoting disassembly of the microtubules. Disassembles microtubules at the distal flagellar tips in a length-dependent manner in order to maintain different equilibrium lengths of the four flagellar pairs. Regulates interphase and mitotic microtubule dynamics. Regulates microtubule disassembly dynamics of the dual mitotic spindles and the median body. This chain is Kinesin-like protein KIN-13, found in Giardia intestinalis (strain ATCC 50803 / WB clone C6) (Giardia lamblia).